The chain runs to 480 residues: tRNA (guanine(37)-N(1))-methyltransferase (480 aa).

Residues histidine 244, 292-293 (DL), 321-322 (DG), and asparagine 342 each bind S-adenosyl-L-methionine.

It belongs to the class I-like SAM-binding methyltransferase superfamily. TRM5/TYW2 family. As to quaternary structure, monomer.

Its subcellular location is the mitochondrion matrix. The protein resides in the nucleus. The protein localises to the cytoplasm. It catalyses the reaction guanosine(37) in tRNA + S-adenosyl-L-methionine = N(1)-methylguanosine(37) in tRNA + S-adenosyl-L-homocysteine + H(+). Functionally, specifically methylates the N1 position of guanosine-37 in various cytoplasmic and mitochondrial tRNAs. Methylation is not dependent on the nature of the nucleoside 5' of the target nucleoside. This is the first step in the biosynthesis of wybutosine (yW), a modified base adjacent to the anticodon of tRNAs and required for accurate decoding. The protein is tRNA (guanine(37)-N(1))-methyltransferase of Thalassiosira pseudonana (Marine diatom).